The following is a 107-amino-acid chain: Large ribosomal subunit protein uL23 (107 aa).

The protein belongs to the universal ribosomal protein uL23 family. In terms of assembly, part of the 50S ribosomal subunit. Contacts protein L29, and trigger factor when it is bound to the ribosome.

In terms of biological role, one of the early assembly proteins it binds 23S rRNA. One of the proteins that surrounds the polypeptide exit tunnel on the outside of the ribosome. Forms the main docking site for trigger factor binding to the ribosome. This is Large ribosomal subunit protein uL23 from Rhodopirellula baltica (strain DSM 10527 / NCIMB 13988 / SH1).